Here is a 510-residue protein sequence, read N- to C-terminus: MTTSIIERIDAWAEKTPDFPCYEYAGTRLSYKELKRQSDAFGSFLLKTLNTDKEKPIIVYGHMSPLMLVAFLGSIKSGRAYVPVDVSMPVERIEQIKKAADPSLFICTEELPSNLTITGCPVLTQDQLMDALEKHFGEVPDKEACVKNDDNYYIIYTSGSTGNPKGVQISQNNLVSFSNWILQDFSLSQGLRFLNQAPFSFDLSVMDLYPSLLSGGTLVPLDKTITANMKDLYREIPAQNLDVWVSTPSFADLCLLDDNFNQENNPGLIHFLFCGEVLAKKTASELLNRFPDAVIYNTYGPTEATVAVTQVKVTREVIDAYPSLPLGVIKPDMRLHIVDQETGEVLPEGEKGEIVLIGASVSKGYLNEPEKTDQVFFDYKGYQAYRTGDSGIIKDGYLFFQGRLDFQIKLHGYRIELEDIENNLKKVSYIQNCAIIPKMKDEKVDMLVAQVIPTNHDFEKEYQLSAAIKNELKEFMPAYMIPRKWIYKTEFPLTMNGKIDRKALNSEVNK.

157–158 provides a ligand contact to ATP; it reads TS. Asp-202 lines the D-alanine pocket. An ATP-binding site is contributed by 297-302; sequence NTYGPT. Val-306 is a binding site for D-alanine. Asp-389 and Lys-498 together coordinate ATP. Lys-498 is a binding site for D-alanine.

This sequence belongs to the ATP-dependent AMP-binding enzyme family. DltA subfamily.

It localises to the cytoplasm. The catalysed reaction is holo-[D-alanyl-carrier protein] + D-alanine + ATP = D-alanyl-[D-alanyl-carrier protein] + AMP + diphosphate. The protein operates within cell wall biogenesis; lipoteichoic acid biosynthesis. Its function is as follows. Catalyzes the first step in the D-alanylation of lipoteichoic acid (LTA), the activation of D-alanine and its transfer onto the D-alanyl carrier protein (Dcp) DltC. In an ATP-dependent two-step reaction, forms a high energy D-alanyl-AMP intermediate, followed by transfer of the D-alanyl residue as a thiol ester to the phosphopantheinyl prosthetic group of the Dcp. D-alanylation of LTA plays an important role in modulating the properties of the cell wall in Gram-positive bacteria, influencing the net charge of the cell wall. This Listeria monocytogenes serotype 4b (strain CLIP80459) protein is D-alanine--D-alanyl carrier protein ligase.